A 544-amino-acid polypeptide reads, in one-letter code: CTP synthase (544 aa).

An amidoligase domain region spans residues 1 to 265 (MARFIFITGG…DKAVLSAFGL (265 aa)). Residue Ser-13 coordinates CTP. UTP is bound at residue Ser-13. 14–19 (SLGKGL) contacts ATP. Tyr-54 serves as a coordination point for L-glutamine. Asp-71 contacts ATP. Residues Asp-71 and Glu-139 each coordinate Mg(2+). Residues 146–148 (DIE), 186–191 (KTKPTQ), and Lys-222 each bind CTP. UTP contacts are provided by residues 186–191 (KTKPTQ) and Lys-222. In terms of domain architecture, Glutamine amidotransferase type-1 spans 291-543 (TIGVVGKYVG…VAAALKQSRL (253 aa)). Gly-355 serves as a coordination point for L-glutamine. Cys-382 acts as the Nucleophile; for glutamine hydrolysis in catalysis. L-glutamine contacts are provided by residues 383–386 (LGMQ), Glu-406, and Arg-471. Active-site residues include His-516 and Glu-518.

The protein belongs to the CTP synthase family. In terms of assembly, homotetramer.

It catalyses the reaction UTP + L-glutamine + ATP + H2O = CTP + L-glutamate + ADP + phosphate + 2 H(+). The enzyme catalyses L-glutamine + H2O = L-glutamate + NH4(+). It carries out the reaction UTP + NH4(+) + ATP = CTP + ADP + phosphate + 2 H(+). Its pathway is pyrimidine metabolism; CTP biosynthesis via de novo pathway; CTP from UDP: step 2/2. Allosterically activated by GTP, when glutamine is the substrate; GTP has no effect on the reaction when ammonia is the substrate. The allosteric effector GTP functions by stabilizing the protein conformation that binds the tetrahedral intermediate(s) formed during glutamine hydrolysis. Inhibited by the product CTP, via allosteric rather than competitive inhibition. In terms of biological role, catalyzes the ATP-dependent amination of UTP to CTP with either L-glutamine or ammonia as the source of nitrogen. Regulates intracellular CTP levels through interactions with the four ribonucleotide triphosphates. In Zymomonas mobilis subsp. mobilis (strain ATCC 31821 / ZM4 / CP4), this protein is CTP synthase.